The sequence spans 434 residues: Transcription initiation factor IIE subunit alpha (434 aa).

Residues 8 to 99 (VQRLIKMIMR…DFCSTIDSIK (92 aa)) enclose the HTH TFE/IIEalpha-type domain. A C4-type zinc finger spans residues 124–151 (CPFCNKKFSSLDVLSLVTNEGTFACNVC). 3 disordered regions span residues 217-251 (QQNL…EKRE), 357-408 (STDY…EMQE), and 415-434 (INGF…FEDV). Positions 226-238 (DVRLSTSSPSITV) are enriched in polar residues. 2 stretches are compositionally biased toward basic and acidic residues: residues 241–251 (SADKETDEKRE) and 376–385 (IQNKRTKSIE). Polar residues predominate over residues 386-399 (ENNSLPPIVSTNGI). Acidic residues predominate over residues 419–434 (NEDDEDDEDEADFEDV).

Belongs to the TFIIE alpha subunit family. TFIIE is a tetramer of two alpha (tfa1) and two beta (tfa2) subunits.

It localises to the nucleus. In terms of biological role, recruits TFIIH to the initiation complex and stimulates the RNA polymerase II C-terminal domain kinase and DNA-dependent ATPase activities of TFIIH. Both TFIIH and TFIIE are required for promoter clearance by RNA polymerase. The sequence is that of Transcription initiation factor IIE subunit alpha (tfa1) from Schizosaccharomyces pombe (strain 972 / ATCC 24843) (Fission yeast).